The sequence spans 96 residues: Small ribosomal subunit protein bS6 (96 aa).

The protein belongs to the bacterial ribosomal protein bS6 family.

In terms of biological role, binds together with bS18 to 16S ribosomal RNA. This is Small ribosomal subunit protein bS6 from Streptococcus thermophilus (strain ATCC BAA-491 / LMD-9).